The sequence spans 79 residues: Sec-independent protein translocase protein TatA (79 aa).

A helical membrane pass occupies residues 1–21 (MGSLSIWHWIVVIAVILLLFG). The segment covering 43–60 (MQDDEKTAEKPEPVKTID) has biased composition (basic and acidic residues). Residues 43-79 (MQDDEKTAEKPEPVKTIDHNAPAPGASRSDVGSKTTV) form a disordered region.

It belongs to the TatA/E family. The Tat system comprises two distinct complexes: a TatABC complex, containing multiple copies of TatA, TatB and TatC subunits, and a separate TatA complex, containing only TatA subunits. Substrates initially bind to the TatABC complex, which probably triggers association of the separate TatA complex to form the active translocon.

The protein localises to the cell inner membrane. In terms of biological role, part of the twin-arginine translocation (Tat) system that transports large folded proteins containing a characteristic twin-arginine motif in their signal peptide across membranes. TatA could form the protein-conducting channel of the Tat system. This Nitrobacter hamburgensis (strain DSM 10229 / NCIMB 13809 / X14) protein is Sec-independent protein translocase protein TatA.